The sequence spans 456 residues: tRNA-2-methylthio-N(6)-dimethylallyladenosine synthase (456 aa).

In terms of domain architecture, MTTase N-terminal spans 19 to 137 (KHFFIETWGC…FPEYLHRVQV (119 aa)). [4Fe-4S] cluster contacts are provided by Cys28, Cys64, Cys98, Cys174, Cys178, and Cys181. One can recognise a Radical SAM core domain in the interval 160–392 (RKSNVKAFVT…AVNEGIVVGN (233 aa)). Residues 393 to 456 (KAAEGKIYEV…SFSLVGEVVE (64 aa)) form the TRAM domain.

Belongs to the methylthiotransferase family. MiaB subfamily. In terms of assembly, monomer. [4Fe-4S] cluster serves as cofactor.

It is found in the cytoplasm. The enzyme catalyses N(6)-dimethylallyladenosine(37) in tRNA + (sulfur carrier)-SH + AH2 + 2 S-adenosyl-L-methionine = 2-methylsulfanyl-N(6)-dimethylallyladenosine(37) in tRNA + (sulfur carrier)-H + 5'-deoxyadenosine + L-methionine + A + S-adenosyl-L-homocysteine + 2 H(+). In terms of biological role, catalyzes the methylthiolation of N6-(dimethylallyl)adenosine (i(6)A), leading to the formation of 2-methylthio-N6-(dimethylallyl)adenosine (ms(2)i(6)A) at position 37 in tRNAs that read codons beginning with uridine. In Clostridium botulinum (strain Eklund 17B / Type B), this protein is tRNA-2-methylthio-N(6)-dimethylallyladenosine synthase.